Consider the following 399-residue polypeptide: uncharacterized protein (399 aa).

Belongs to the NADH:flavin oxidoreductase/NADH oxidase family. Directly interacts with lipoylated GcvH-L (SpyM50867).

This is an uncharacterized protein from Streptococcus pyogenes serotype M5 (strain Manfredo).